Consider the following 109-residue polypeptide: Large ribosomal subunit protein uL22 (109 aa).

This sequence belongs to the universal ribosomal protein uL22 family. Part of the 50S ribosomal subunit.

Its function is as follows. This protein binds specifically to 23S rRNA; its binding is stimulated by other ribosomal proteins, e.g. L4, L17, and L20. It is important during the early stages of 50S assembly. It makes multiple contacts with different domains of the 23S rRNA in the assembled 50S subunit and ribosome. The globular domain of the protein is located near the polypeptide exit tunnel on the outside of the subunit, while an extended beta-hairpin is found that lines the wall of the exit tunnel in the center of the 70S ribosome. The chain is Large ribosomal subunit protein uL22 from Dechloromonas aromatica (strain RCB).